Reading from the N-terminus, the 141-residue chain is Large ribosomal subunit protein uL11 (141 aa).

Belongs to the universal ribosomal protein uL11 family. Part of the ribosomal stalk of the 50S ribosomal subunit. Interacts with L10 and the large rRNA to form the base of the stalk. L10 forms an elongated spine to which L12 dimers bind in a sequential fashion forming a multimeric L10(L12)X complex. In terms of processing, one or more lysine residues are methylated.

In terms of biological role, forms part of the ribosomal stalk which helps the ribosome interact with GTP-bound translation factors. This is Large ribosomal subunit protein uL11 from Chlorobium chlorochromatii (strain CaD3).